The chain runs to 104 residues: UPF0145 protein HCH_01985 (104 aa).

The protein belongs to the UPF0145 family.

The sequence is that of UPF0145 protein HCH_01985 from Hahella chejuensis (strain KCTC 2396).